The chain runs to 381 residues: Alpha-methylacyl-CoA racemase (381 aa).

Substrate is bound by residues arginine 36 and 54–57 (LDLK). Lysine 57 carries the post-translational modification N6-acetyllysine. Residues lysine 86 and lysine 100 each carry the N6-acetyllysine; alternate modification. 2 positions are modified to N6-succinyllysine; alternate: lysine 86 and lysine 100. Lysine 117 bears the N6-acetyllysine mark. 120–125 (GHDINY) contributes to the substrate binding site. The active-site Proton acceptor is histidine 121. The active-site Proton donor is the aspartate 151. Position 267 is an N6-succinyllysine (lysine 267). The tract at residues 316 to 344 (TDGEQLPSPRPAPLLSRTPAVPSAKRDPS) is disordered. A Microbody targeting signal motif is present at residues 379–381 (ANL).

This sequence belongs to the CoA-transferase III family. As to quaternary structure, monomer.

The protein resides in the peroxisome. Its subcellular location is the mitochondrion. The catalysed reaction is a (2S)-2-methylacyl-CoA = a (2R)-2-methylacyl-CoA. The enzyme catalyses (25R)-3alpha,7alpha,12alpha-trihydroxy-5beta-cholestan-26-oyl-CoA = (25S)-3alpha,7alpha,12alpha-trihydroxy-5beta-cholestan-26-oyl-CoA. It carries out the reaction (2R,6)-dimethylheptanoyl-CoA = (2S,6)-dimethylheptanoyl-CoA. The protein operates within lipid metabolism; bile acid biosynthesis. It participates in lipid metabolism; fatty acid metabolism. Its function is as follows. Catalyzes the interconversion of (R)- and (S)-stereoisomers of alpha-methyl-branched-chain fatty acyl-CoA esters. Acts only on coenzyme A thioesters, not on free fatty acids, and accepts as substrates a wide range of alpha-methylacyl-CoAs, including pristanoyl-CoA, trihydroxycoprostanoyl-CoA (an intermediate in bile acid synthesis), and arylpropionic acids like the anti-inflammatory drug ibuprofen (2-(4-isobutylphenyl)propionic acid) but neither 3-methyl-branched nor linear-chain acyl-CoAs. The protein is Alpha-methylacyl-CoA racemase (Amacr) of Mus musculus (Mouse).